A 100-amino-acid polypeptide reads, in one-letter code: uncharacterized protein (100 aa).

A helical transmembrane segment spans residues 62-82 (IPIVIIVSIFILLIIGSISLY).

It localises to the membrane. This is an uncharacterized protein from Dictyostelium discoideum (Social amoeba).